The chain runs to 192 residues: Ribosomal RNA small subunit methyltransferase G (192 aa).

Residues Gly-63, Leu-68, 112–113, and Arg-125 contribute to the S-adenosyl-L-methionine site; that span reads IE.

The protein belongs to the methyltransferase superfamily. RNA methyltransferase RsmG family.

The protein resides in the cytoplasm. The enzyme catalyses guanosine(527) in 16S rRNA + S-adenosyl-L-methionine = N(7)-methylguanosine(527) in 16S rRNA + S-adenosyl-L-homocysteine. Its function is as follows. Specifically methylates the N7 position of guanine in position 527 of 16S rRNA. This is Ribosomal RNA small subunit methyltransferase G from Rickettsia africae (strain ESF-5).